The following is a 574-amino-acid chain: 2-succinyl-5-enolpyruvyl-6-hydroxy-3-cyclohexene-1-carboxylate synthase (574 aa).

Belongs to the TPP enzyme family. MenD subfamily. As to quaternary structure, homodimer. Requires Mg(2+) as cofactor. Mn(2+) serves as cofactor. It depends on thiamine diphosphate as a cofactor.

It carries out the reaction isochorismate + 2-oxoglutarate + H(+) = 5-enolpyruvoyl-6-hydroxy-2-succinyl-cyclohex-3-ene-1-carboxylate + CO2. Its pathway is quinol/quinone metabolism; 1,4-dihydroxy-2-naphthoate biosynthesis; 1,4-dihydroxy-2-naphthoate from chorismate: step 2/7. The protein operates within cofactor biosynthesis; phylloquinone biosynthesis. Functionally, catalyzes the thiamine diphosphate-dependent decarboxylation of 2-oxoglutarate and the subsequent addition of the resulting succinic semialdehyde-thiamine pyrophosphate anion to isochorismate to yield 2-succinyl-5-enolpyruvyl-6-hydroxy-3-cyclohexene-1-carboxylate (SEPHCHC). The polypeptide is 2-succinyl-5-enolpyruvyl-6-hydroxy-3-cyclohexene-1-carboxylate synthase (Synechococcus sp. (strain RCC307)).